A 91-amino-acid polypeptide reads, in one-letter code: Small ribosomal subunit protein bS18 (91 aa).

A compositionally biased stretch (low complexity) spans 1–14 (MTNQNQSQTQTTQT). Residues 1–24 (MTNQNQSQTQTTQTVEKVSSRQKK) form a disordered region.

The protein belongs to the bacterial ribosomal protein bS18 family. Part of the 30S ribosomal subunit. Forms a tight heterodimer with protein bS6.

Functionally, binds as a heterodimer with protein bS6 to the central domain of the 16S rRNA, where it helps stabilize the platform of the 30S subunit. The chain is Small ribosomal subunit protein bS18 from Caldicellulosiruptor saccharolyticus (strain ATCC 43494 / DSM 8903 / Tp8T 6331).